A 207-amino-acid chain; its full sequence is Ion-translocating oxidoreductase complex subunit G (207 aa).

Residues 11-31 (GILLGFIALLCTIISAGIYFL) traverse the membrane as a helical segment. The residue at position 175 (Thr-175) is an FMN phosphoryl threonine.

The protein belongs to the RnfG family. In terms of assembly, the complex is composed of six subunits: RnfA, RnfB, RnfC, RnfD, RnfE and RnfG. Requires FMN as cofactor.

It localises to the cell inner membrane. Part of a membrane-bound complex that couples electron transfer with translocation of ions across the membrane. The sequence is that of Ion-translocating oxidoreductase complex subunit G from Haemophilus influenzae (strain PittEE).